Reading from the N-terminus, the 208-residue chain is MGGKDIDRLIEERRKQQNIEEILPELQLEERLIYANRTARVTKGGRRFSFSTLVVVGDRKGHVGFGHGKAKEVTLAIAKGIEKAKKNVIRVPIVDGTVPHDVIGTFGATKIIVLPARRGTGVVAGGAAKPVFELAGYTDVLTKIIGSTNPDNVVRAVFDALLQLKTPEQIAEERGLPVEEILRRYRRYALPKMNIKHYYPWRGIYEQT.

In terms of domain architecture, S5 DRBM spans 28–91; it reads LEERLIYANR…EKAKKNVIRV (64 aa).

This sequence belongs to the universal ribosomal protein uS5 family. As to quaternary structure, part of the 30S ribosomal subunit. Contacts proteins S4 and S8.

In terms of biological role, with S4 and S12 plays an important role in translational accuracy. Functionally, located at the back of the 30S subunit body where it stabilizes the conformation of the head with respect to the body. The chain is Small ribosomal subunit protein uS5 from Aquifex aeolicus (strain VF5).